A 223-amino-acid chain; its full sequence is MGFDFNYMLELLPILLKYLGTTMEMATWGLVFSLILSVILANIRVFKLPVLDQLSQLYISFFRGTPLLVQLFLLYYGLPQIFPFMVGIDAFSAAVIGLTLHFAAYMAESIRAAIIGIDRSQMEASLSVGMTTTQAMRRVILPQATRVALPSLMNYFIDMIKSTSLAFTLGVAEIMAKAQMEASSSFRFFEAFLAVALIYWGVVVILTRVQIWAEAKLNKAYVR.

Residues 19 to 210 (LGTTMEMATW…GVVVILTRVQ (192 aa)) enclose the ABC transmembrane type-1 domain. The next 5 membrane-spanning stretches (helical) occupy residues 23–43 (MEMA…LANI), 59–78 (ISFF…YYGL), 90–110 (AFSA…AESI), 156–176 (FIDM…EIMA), and 186–206 (FRFF…VVIL).

Belongs to the binding-protein-dependent transport system permease family. HisMQ subfamily.

The protein localises to the cell inner membrane. Probably part of a binding-protein-dependent transport system for an amino acid. Probably responsible for the translocation of the substrate across the membrane. The chain is Probable amino-acid ABC transporter permease protein PatM (patM) from Vibrio harveyi (Beneckea harveyi).